We begin with the raw amino-acid sequence, 122 residues long: Ribosome-binding factor A (122 aa).

It belongs to the RbfA family. As to quaternary structure, monomer. Binds 30S ribosomal subunits, but not 50S ribosomal subunits or 70S ribosomes.

The protein localises to the cytoplasm. In terms of biological role, one of several proteins that assist in the late maturation steps of the functional core of the 30S ribosomal subunit. Associates with free 30S ribosomal subunits (but not with 30S subunits that are part of 70S ribosomes or polysomes). Required for efficient processing of 16S rRNA. May interact with the 5'-terminal helix region of 16S rRNA. This chain is Ribosome-binding factor A, found in Dichelobacter nodosus (strain VCS1703A).